Reading from the N-terminus, the 470-residue chain is MKEFENPPPITVAIGLGRSGVAAARYLNDQGEKVQIFESSKKASFGKLSGNLEKEGIKVNLGVPLNFSSFQPILEKLALVIVSPGIPWDHPTLNQLRKRGIIVESEINLAWRALKNTPWVGITGTNGKTTVTHMLNHVLNNSFIESTIGGNVGKAATEIALALRKSTKHKPKWLIMELSSYQIETAPEISPEIGIWTTLTPDHLERHGSLENYFAIKRTLIANSSIRIYNADDKYLSKNRLNLPKGLWVSAQKYNSNINQLDFWISSNGMVIEQGNELFHSSALQLPGDHNLQNLLLVSAAARKIGLSGMAIENALISFAGITHRLEKVDKIIDIDIFNDSKATNFDSAEIGLKATSAPVILIAGGLSKQGIYLDWINQIKEKVCAVILIGESRVKLQHLIKSHGFRGEIVCYEKLDKAVDKAIKLGVKFRAKSILFSPGCASFDQYSNFEERGDHFKKLIKESSINYKL.

124 to 130 contacts ATP; that stretch reads GTNGKTT.

The protein belongs to the MurCDEF family.

The protein resides in the cytoplasm. It catalyses the reaction UDP-N-acetyl-alpha-D-muramoyl-L-alanine + D-glutamate + ATP = UDP-N-acetyl-alpha-D-muramoyl-L-alanyl-D-glutamate + ADP + phosphate + H(+). It participates in cell wall biogenesis; peptidoglycan biosynthesis. In terms of biological role, cell wall formation. Catalyzes the addition of glutamate to the nucleotide precursor UDP-N-acetylmuramoyl-L-alanine (UMA). The sequence is that of UDP-N-acetylmuramoylalanine--D-glutamate ligase from Prochlorococcus marinus (strain SARG / CCMP1375 / SS120).